Reading from the N-terminus, the 189-residue chain is uncharacterized protein (189 aa).

One can recognise an HTH tetR-type domain in the interval arginine 2 to arginine 62. The segment at residues threonine 25–phenylalanine 44 is a DNA-binding region (H-T-H motif).

This is an uncharacterized protein from Bacillus subtilis (strain 168).